A 338-amino-acid chain; its full sequence is Phenylalanine--tRNA ligase alpha subunit (338 aa).

Glu252 provides a ligand contact to Mg(2+).

It belongs to the class-II aminoacyl-tRNA synthetase family. Phe-tRNA synthetase alpha subunit type 1 subfamily. As to quaternary structure, tetramer of two alpha and two beta subunits. It depends on Mg(2+) as a cofactor.

The protein resides in the cytoplasm. It carries out the reaction tRNA(Phe) + L-phenylalanine + ATP = L-phenylalanyl-tRNA(Phe) + AMP + diphosphate + H(+). The sequence is that of Phenylalanine--tRNA ligase alpha subunit from Pseudomonas aeruginosa (strain UCBPP-PA14).